The following is a 354-amino-acid chain: 3-isopropylmalate dehydrogenase (354 aa).

76 to 87 (GPRWDGAKERPE) lines the NAD(+) pocket. Positions 94, 104, 130, and 215 each coordinate substrate. D215, D239, and D243 together coordinate Mg(2+). 273 to 285 (GSAPDIAGKNKAN) provides a ligand contact to NAD(+).

Belongs to the isocitrate and isopropylmalate dehydrogenases family. LeuB type 1 subfamily. As to quaternary structure, homodimer. Mg(2+) serves as cofactor. The cofactor is Mn(2+).

The protein localises to the cytoplasm. It carries out the reaction (2R,3S)-3-isopropylmalate + NAD(+) = 4-methyl-2-oxopentanoate + CO2 + NADH. It participates in amino-acid biosynthesis; L-leucine biosynthesis; L-leucine from 3-methyl-2-oxobutanoate: step 3/4. Its function is as follows. Catalyzes the oxidation of 3-carboxy-2-hydroxy-4-methylpentanoate (3-isopropylmalate) to 3-carboxy-4-methyl-2-oxopentanoate. The product decarboxylates to 4-methyl-2 oxopentanoate. This chain is 3-isopropylmalate dehydrogenase, found in Bacillus cereus (strain ZK / E33L).